We begin with the raw amino-acid sequence, 446 residues long: tRNA-2-methylthio-N(6)-dimethylallyladenosine synthase (446 aa).

An MTTase N-terminal domain is found at 2–122 (KKAYVKSYGC…LPDLLRQSRE (121 aa)). [4Fe-4S] cluster is bound by residues Cys11, Cys47, Cys85, Cys157, Cys161, and Cys164. Residues 143 to 375 (RNRGVTGFLT…QQLLDQQRHA (233 aa)) enclose the Radical SAM core domain. Residues 378 to 440 (AAAVGTVAEI…SNSLFGEVLE (63 aa)) form the TRAM domain.

This sequence belongs to the methylthiotransferase family. MiaB subfamily. As to quaternary structure, monomer. [4Fe-4S] cluster is required as a cofactor.

The protein resides in the cytoplasm. It catalyses the reaction N(6)-dimethylallyladenosine(37) in tRNA + (sulfur carrier)-SH + AH2 + 2 S-adenosyl-L-methionine = 2-methylsulfanyl-N(6)-dimethylallyladenosine(37) in tRNA + (sulfur carrier)-H + 5'-deoxyadenosine + L-methionine + A + S-adenosyl-L-homocysteine + 2 H(+). Catalyzes the methylthiolation of N6-(dimethylallyl)adenosine (i(6)A), leading to the formation of 2-methylthio-N6-(dimethylallyl)adenosine (ms(2)i(6)A) at position 37 in tRNAs that read codons beginning with uridine. This is tRNA-2-methylthio-N(6)-dimethylallyladenosine synthase from Methylorubrum populi (strain ATCC BAA-705 / NCIMB 13946 / BJ001) (Methylobacterium populi).